A 121-amino-acid chain; its full sequence is Holo-[acyl-carrier-protein] synthase (121 aa).

The Mg(2+) site is built by Asp-8 and Glu-58.

It belongs to the P-Pant transferase superfamily. AcpS family. As to quaternary structure, homotrimer. It depends on Mg(2+) as a cofactor.

Its subcellular location is the cytoplasm. The enzyme catalyses apo-[ACP] + CoA = holo-[ACP] + adenosine 3',5'-bisphosphate + H(+). Transfers the 4'-phosphopantetheine moiety from coenzyme A to a Ser of fatty acid acyl-carrier-protein ACP. Also modifies the D-alanyl carrier protein but fails to recognize PCP and AcpK, an acyl carrier protein of secondary metabolism. The protein is Holo-[acyl-carrier-protein] synthase of Bacillus subtilis (strain 168).